A 537-amino-acid polypeptide reads, in one-letter code: Phosphoenolpyruvate carboxykinase (ATP) (537 aa).

Substrate is bound by residues arginine 61, tyrosine 194, and lysine 200. ATP-binding positions include lysine 200, histidine 219, and 235-243; that span reads GLSGTGKTT. Mn(2+) contacts are provided by lysine 200 and histidine 219. Residue aspartate 256 participates in Mn(2+) binding. ATP contacts are provided by glutamate 284, arginine 322, and threonine 448. Arginine 322 contacts substrate.

Belongs to the phosphoenolpyruvate carboxykinase (ATP) family. The cofactor is Mn(2+).

It localises to the cytoplasm. It carries out the reaction oxaloacetate + ATP = phosphoenolpyruvate + ADP + CO2. It functions in the pathway carbohydrate biosynthesis; gluconeogenesis. Involved in the gluconeogenesis. Catalyzes the conversion of oxaloacetate (OAA) to phosphoenolpyruvate (PEP) through direct phosphoryl transfer between the nucleoside triphosphate and OAA. This chain is Phosphoenolpyruvate carboxykinase (ATP), found in Bradyrhizobium sp. (strain ORS 278).